The following is a 249-amino-acid chain: Probable transcriptional regulatory protein ACIAD2052 (249 aa).

It belongs to the TACO1 family.

The protein resides in the cytoplasm. The chain is Probable transcriptional regulatory protein ACIAD2052 from Acinetobacter baylyi (strain ATCC 33305 / BD413 / ADP1).